A 141-amino-acid chain; its full sequence is MEMLQGLLLWLLLSMGGARASREPLRPLCRPINATLAAEKEACPVCITVNTSICAGYCPTMMRVLQAALLPLPQVVCTYHEVRFDSIQLPGCLPGVDPVVSFPVALSCRCGPCHRSTSDCGGPKDHPLTCDHPQLPGLLFL.

The N-terminal stretch at 1 to 20 is a signal peptide; the sequence is MEMLQGLLLWLLLSMGGARA. Disulfide bonds link Cys-29–Cys-77, Cys-43–Cys-92, Cys-46–Cys-130, Cys-54–Cys-108, Cys-58–Cys-110, and Cys-113–Cys-120. N-linked (GlcNAc...) asparagine glycosylation is found at Asn-33 and Asn-50.

Belongs to the glycoprotein hormones subunit beta family. In terms of assembly, heterodimer of a common alpha chain and a unique beta chain which confers biological specificity to thyrotropin, lutropin, follitropin and gonadotropin.

It is found in the secreted. In terms of biological role, promotes spermatogenesis and ovulation by stimulating the testes and ovaries to synthesize steroids. This Macaca fascicularis (Crab-eating macaque) protein is Lutropin subunit beta (LHB).